We begin with the raw amino-acid sequence, 765 residues long: Leucine-rich repeat and calponin homology domain-containing protein 2 (765 aa).

Disordered regions lie at residues 1 to 39 (MAAS…GGGG) and 55 to 76 (LFGQ…PQHT). 9 LRR repeats span residues 89 to 110 (SSGI…GYDL), 112 to 133 (DTTQ…VWLF), 135 to 156 (PLET…IKNL), 158 to 179 (MLTY…LFDL), 180 to 201 (PLKV…IGKL), 203 to 224 (DLME…MGKL), 226 to 248 (SLRE…GDLP), 249 to 269 (LVKL…YRKL), and 271 to 292 (HLQV…ICLK). The interval 316-401 (LDLPSLSKRM…GSKTDSQKDQ (86 aa)) is disordered. Residues 378–388 (SNREQTSRNDS) are compositionally biased toward basic and acidic residues. Positions 438–472 (SEKSRKNEELGDEKRLEKEQLLAEEEDDDLKEVTD) form a coiled coil. Disordered stretches follow at residues 498 to 552 (RNKP…QSEE) and 565 to 628 (KYKS…EYGA). Residues 503-512 (QTVECEKSVS) show a composition bias toward basic and acidic residues. 2 stretches are compositionally biased toward polar residues: residues 518–529 (SPLSPLTWQPLE) and 584–595 (DNANMSTQSPVS). One can recognise a Calponin-homology (CH) domain in the interval 642-755 (LREEREQIRQ…VTVQALLELP (114 aa)).

In terms of biological role, may play a role in the organization of the cytoskeleton. This Homo sapiens (Human) protein is Leucine-rich repeat and calponin homology domain-containing protein 2 (LRCH2).